The chain runs to 610 residues: MENKRNFFITIALSILILALWQVFYLGPKTEAQREQARIEEQQRQAQQAAQNRQASSSTGDTPQMPANPDSIPGQGDTKAAGAPLTRDAAIAQSPRIEIDTPSLRGSINLTGARLDDLYLKKYHETVSDKSPEIELLAPSSLKQGYFVELGFTGNDATGAVPGPNTVWVVEGNNKLTPSTPVTLTYTNDKNLTFKRVISVDDAYMFTVDDTIINNGGSTVSLASYGRVTRFNQPEHASATYVLHEGLIGVMGQDGLQEIKYAKIEDNKDISFKDVIGGWVGITDKYWAATLIPPQDEKFTGRFSHFTNDRPRYQSDLLSAPLTVAPGQSQKIQNRVFAGAKVVNTIQNYETKYHIKQFDLLIDWGWFYFITKPMFYLIDWIYKFTGNFGVAILVVTVLLKALFFPLANKSYKSMARMKLMQPKMTEIREKYADDKMKQQQAMMELYKREKINPLAGCWPVLVQIPVFFALYKVLYVTIEMRHAPFFGWIQDLAAPDPTSIFNLFGLLPYTVPHFLMIGVWPIIMGIIMFLQMRMNPTPPDPTQAAIFTWMPIIFTFMLASFPAGLVIYWAWNNTLSIIQQSVIMKRQGVKIELFDNLKGLFRRKPKEANK.

The helical transmembrane segment at phenylalanine 7–glycine 27 threads the bilayer. Positions glutamine 36 to glycine 82 are disordered. Over residues arginine 44–alanine 55 the composition is skewed to low complexity. 5 helical membrane passes run phenylalanine 358–isoleucine 378, asparagine 387–alanine 407, tryptophan 458–isoleucine 478, threonine 510–leucine 530, and isoleucine 546–valine 566.

It belongs to the OXA1/ALB3/YidC family. Type 1 subfamily. As to quaternary structure, interacts with the Sec translocase complex via SecD. Specifically interacts with transmembrane segments of nascent integral membrane proteins during membrane integration.

It is found in the cell inner membrane. Required for the insertion and/or proper folding and/or complex formation of integral membrane proteins into the membrane. Involved in integration of membrane proteins that insert both dependently and independently of the Sec translocase complex, as well as at least some lipoproteins. Aids folding of multispanning membrane proteins. The polypeptide is Membrane protein insertase YidC (Brucella melitensis biotype 1 (strain ATCC 23456 / CCUG 17765 / NCTC 10094 / 16M)).